The following is a 349-amino-acid chain: sn-glycerol-3-phosphate import ATP-binding protein UgpC (349 aa).

Residues 4–235 (ITLKDVHKTY…PATAFVATFI (232 aa)) enclose the ABC transporter domain. Residue 37–44 (GPSGCGKS) participates in ATP binding.

It belongs to the ABC transporter superfamily. sn-glycerol-3-phosphate importer (TC 3.A.1.1.3) family. In terms of assembly, the complex is composed of two ATP-binding proteins (UgpC), two transmembrane proteins (UgpA and UgpE) and a solute-binding protein (UgpB).

It is found in the cell inner membrane. It carries out the reaction sn-glycerol 3-phosphate(out) + ATP + H2O = sn-glycerol 3-phosphate(in) + ADP + phosphate + H(+). Functionally, part of the ABC transporter complex UgpBAEC involved in sn-glycerol-3-phosphate (G3P) import. Responsible for energy coupling to the transport system. The polypeptide is sn-glycerol-3-phosphate import ATP-binding protein UgpC (Rhizobium meliloti (strain 1021) (Ensifer meliloti)).